The primary structure comprises 85 residues: Mitochondrial protein pet191 homolog (85 aa).

The CHCH domain occupies 18–61; the sequence is HSDCMFVKKKSARECLKNKDELPEECKNLIEAYGECKRQMLDMT. Residues 21–32 carry the Cx10C motif motif; the sequence is CMFVKKKSAREC. 2 cysteine pairs are disulfide-bonded: Cys-21–Cys-53 and Cys-32–Cys-43. A Cx9C motif motif is present at residues 43-53; sequence CKNLIEAYGEC. Positions 65 to 85 are disordered; it reads RIAPEKNTDQDTEKPSNVDEQ.

Belongs to the PET191 family.

It is found in the mitochondrion. Its function is as follows. Involved in the assembly of cytochrome c oxidase. The chain is Mitochondrial protein pet191 homolog from Schizosaccharomyces pombe (strain 972 / ATCC 24843) (Fission yeast).